Here is an 80-residue protein sequence, read N- to C-terminus: Bowman-Birk type proteinase inhibitor DE-4 (80 aa).

The span at 1–10 shows a compositional bias: acidic residues; it reads DDDHSDDEPR. The disordered stretch occupies residues 1-29; the sequence is DDDHSDDEPRESESSKPCCSSCCTRSRPP. The span at 15 to 29 shows a compositional bias: low complexity; sequence SKPCCSSCCTRSRPP. Disulfide bonds link Cys18/Cys71, Cys19/Cys33, Cys22/Cys67, Cys23/Cys31, Cys41/Cys48, Cys45/Cys60, and Cys50/Cys58.

It belongs to the Bowman-Birk serine protease inhibitor family.

The polypeptide is Bowman-Birk type proteinase inhibitor DE-4 (Philenoptera violacea (Apple-leaf)).